Reading from the N-terminus, the 411-residue chain is Serine/threonine-protein kinase 54 (411 aa).

Residues S43 and S45 each carry the phosphoserine; by PHOT1 modification. One can recognise a Protein kinase domain in the interval 108 to 385; it reads LIIKSVIARG…EEVVAMLEAI (278 aa). ATP-binding positions include 114–122 and K135; that span reads IARGTFGTV. D253 (proton acceptor) is an active-site residue. Residue T286 is modified to Phosphothreonine.

It belongs to the protein kinase superfamily. Ser/Thr protein kinase family. As to quaternary structure, binds to CBC2. Associates with PHOT2, BLUS1 and PM H(+)-ATPase (e.g. AHA1). Autophosphorylated. Phosphorylated in guard cells by HT1 in response to low CO(2) concentrations and by PHOT1 after blue light (BL) exposure. In terms of tissue distribution, expressed in guard cells.

It is found in the cytoplasm. The protein resides in the cytosol. The catalysed reaction is L-seryl-[protein] + ATP = O-phospho-L-seryl-[protein] + ADP + H(+). It catalyses the reaction L-threonyl-[protein] + ATP = O-phospho-L-threonyl-[protein] + ADP + H(+). In terms of biological role, serine/threonine protein kinase that phosphorylates proteins on serine and threonine residues. Collectively with CBC2, acts as a negative regulator of stomatal opening, probably via the inhibition of plasma membrane-type ATPases (AHA1 and AHA2) activity in guard cells, but in an abscisic acid (ABA)-independent manner. However, at low concentrations of CO(2), together with CBC2, stimulates stomatal opening via the inhibition of S-type anion channels in response to blue light (BL) and red light (RL), thus being a key component to maximize photosynthesis in the light under low CO(2) conditions. Required for temperature decrease in leaves. Downstream target of HIGH LEAF TEMPERATURE1 (HT1) during low CO(2)-induced stomatal opening. Also functions in the signaling pathways of phototropins. The polypeptide is Serine/threonine-protein kinase 54 (Arabidopsis thaliana (Mouse-ear cress)).